The chain runs to 936 residues: Probable outer membrane protein pmp7 (936 aa).

Residues 1-23 (MKSSVSWLFFSSIPLFSSLSIVA) form the signal peptide. The 301-residue stretch at 636 to 936 (GEPFERELWL…NTNLGSKFCF (301 aa)) folds into the Autotransporter domain.

It belongs to the PMP outer membrane protein family.

It localises to the secreted. Its subcellular location is the cell wall. It is found in the cell outer membrane. This Chlamydia pneumoniae (Chlamydophila pneumoniae) protein is Probable outer membrane protein pmp7 (pmp7).